The following is a 158-amino-acid chain: MMRFMLLFSRQGKLRLQKWYLATSDKERKKMVRELMQVVLARKPKMCSFLEWRDLKVVYKRYASLYFCCAIEGQDNELITLELIHRYVELLDKYFGSVCELDIIFNFEKAYFILDEFLMGGDVQDTSKKSVLKAIEQADLLQEEDESPRSVLEEMGLA.

Position 147 is a phosphoserine (Ser-147).

Belongs to the adaptor complexes small subunit family. In terms of assembly, adaptor protein complex 1 (AP-1) is a heterotetramer composed of two large adaptins (gamma-type subunit AP1G1 and beta-type subunit AP1B1), a medium adaptin (mu-type subunit AP1M1 or AP1M2) and a small adaptin (sigma-type subunit AP1S1 or AP1S2 or AP1S3). As to expression, widely expressed.

The protein resides in the golgi apparatus. It localises to the cytoplasmic vesicle membrane. Its subcellular location is the membrane. It is found in the clathrin-coated pit. Its function is as follows. Subunit of clathrin-associated adaptor protein complex 1 that plays a role in protein sorting in the late-Golgi/trans-Golgi network (TGN) and/or endosomes. The AP complexes mediate both the recruitment of clathrin to membranes and the recognition of sorting signals within the cytosolic tails of transmembrane cargo molecules. This is AP-1 complex subunit sigma-1A (AP1S1) from Homo sapiens (Human).